We begin with the raw amino-acid sequence, 364 residues long: S-adenosylmethionine:tRNA ribosyltransferase-isomerase (364 aa).

Residues 344–364 (ASDKMQETSGRGERPRFDHEI) form a disordered region.

This sequence belongs to the QueA family. As to quaternary structure, monomer.

The protein resides in the cytoplasm. It carries out the reaction 7-aminomethyl-7-carbaguanosine(34) in tRNA + S-adenosyl-L-methionine = epoxyqueuosine(34) in tRNA + adenine + L-methionine + 2 H(+). It functions in the pathway tRNA modification; tRNA-queuosine biosynthesis. Its function is as follows. Transfers and isomerizes the ribose moiety from AdoMet to the 7-aminomethyl group of 7-deazaguanine (preQ1-tRNA) to give epoxyqueuosine (oQ-tRNA). This is S-adenosylmethionine:tRNA ribosyltransferase-isomerase from Thioalkalivibrio sulfidiphilus (strain HL-EbGR7).